We begin with the raw amino-acid sequence, 315 residues long: Ribosomal RNA small subunit methyltransferase H (315 aa).

Residues 33-35 (GGH), aspartate 52, phenylalanine 84, aspartate 106, and glutamine 113 each bind S-adenosyl-L-methionine. The disordered stretch occupies residues 295-315 (SDELEENNRSHSAKLRVAEKL).

The protein belongs to the methyltransferase superfamily. RsmH family.

The protein resides in the cytoplasm. The enzyme catalyses cytidine(1402) in 16S rRNA + S-adenosyl-L-methionine = N(4)-methylcytidine(1402) in 16S rRNA + S-adenosyl-L-homocysteine + H(+). Its function is as follows. Specifically methylates the N4 position of cytidine in position 1402 (C1402) of 16S rRNA. This Lactobacillus gasseri (strain ATCC 33323 / DSM 20243 / BCRC 14619 / CIP 102991 / JCM 1131 / KCTC 3163 / NCIMB 11718 / NCTC 13722 / AM63) protein is Ribosomal RNA small subunit methyltransferase H.